The chain runs to 185 residues: Small ribosomal subunit protein uS4 (185 aa).

The 63-residue stretch at arginine 108–histidine 170 folds into the S4 RNA-binding domain.

Belongs to the universal ribosomal protein uS4 family. As to quaternary structure, part of the 30S ribosomal subunit. Contacts protein S5. The interaction surface between S4 and S5 is involved in control of translational fidelity.

Its function is as follows. One of the primary rRNA binding proteins, it binds directly to 16S rRNA where it nucleates assembly of the body of the 30S subunit. In terms of biological role, with S5 and S12 plays an important role in translational accuracy. The sequence is that of Small ribosomal subunit protein uS4 from Methanoregula boonei (strain DSM 21154 / JCM 14090 / 6A8).